Reading from the N-terminus, the 740-residue chain is 1,4-alpha-glucan branching enzyme GlgB (740 aa).

Aspartate 409 functions as the Nucleophile in the catalytic mechanism. Glutamate 462 acts as the Proton donor in catalysis.

This sequence belongs to the glycosyl hydrolase 13 family. GlgB subfamily. Monomer.

It catalyses the reaction Transfers a segment of a (1-&gt;4)-alpha-D-glucan chain to a primary hydroxy group in a similar glucan chain.. The protein operates within glycan biosynthesis; glycogen biosynthesis. Its function is as follows. Catalyzes the formation of the alpha-1,6-glucosidic linkages in glycogen by scission of a 1,4-alpha-linked oligosaccharide from growing alpha-1,4-glucan chains and the subsequent attachment of the oligosaccharide to the alpha-1,6 position. The chain is 1,4-alpha-glucan branching enzyme GlgB from Methylococcus capsulatus (strain ATCC 33009 / NCIMB 11132 / Bath).